The primary structure comprises 330 residues: MKTAYIAKQRQISFVKSHFSRQLEERLGLIEVQAPILSRVGDGTQDNLSGCEKAVQVKVKALPDAQFEVVHSLAKWKRQTLGQHDFSAGEGLYTHMKALRPDEDRLSPLHSVYVDQWDWERVMGDGERQFSTLKSTVEAIWEGIKATEAAVSEEFGLAPFLPDQIHFVHSQELLSRYPELDAKGRERAIAKDLGAVFLVGIGGKLSDGHRHDVRAPDYDDWSTPSELGHAGLNGDILVWNPVLEDAFELSSMGIRVDADTLKHQLALTGDEDRLELEWHQALLRGEMPQTIGGGIGQSRLTMLLLQLPHIGQVQCGVWPAAVRESVPSLL.

This sequence belongs to the class-II aminoacyl-tRNA synthetase family. AsnA subfamily.

The protein resides in the cytoplasm. It catalyses the reaction L-aspartate + NH4(+) + ATP = L-asparagine + AMP + diphosphate + H(+). It participates in amino-acid biosynthesis; L-asparagine biosynthesis; L-asparagine from L-aspartate (ammonia route): step 1/1. In Escherichia coli O45:K1 (strain S88 / ExPEC), this protein is Aspartate--ammonia ligase.